We begin with the raw amino-acid sequence, 82 residues long: uncharacterized protein (82 aa).

The next 2 helical transmembrane spans lie at 32 to 52 (PFSI…IGIL) and 59 to 79 (SKPL…FNII).

The protein resides in the cell membrane. This is an uncharacterized protein from Rickettsia prowazekii (strain Madrid E).